A 196-amino-acid polypeptide reads, in one-letter code: Beta-crystallin A2 (196 aa).

The N-terminal arm stretch occupies residues 1–11 (MTSEAMDTLGQ). 2 consecutive Beta/gamma crystallin 'Greek key' domains span residues 12 to 51 (YKIT…KVES) and 52 to 98 (GPWV…RPVK). The tract at residues 99–104 (CANHND) is connecting peptide. Beta/gamma crystallin 'Greek key' domains follow at residues 105–146 (SKAI…KVNA) and 147–195 (GAWV…RRIQ).

The protein belongs to the beta/gamma-crystallin family. Homo/heterodimer, or complexes of higher-order. The structure of beta-crystallin oligomers seems to be stabilized through interactions between the N-terminal arms.

Crystallins are the dominant structural components of the vertebrate eye lens. The sequence is that of Beta-crystallin A2 (CRYBA2) from Gallus gallus (Chicken).